Here is a 244-residue protein sequence, read N- to C-terminus: Methylthioribulose-1-phosphate dehydratase (244 aa).

Substrate is bound at residue Cys89. Residues His107 and His109 each coordinate Zn(2+). Glu130 (proton donor/acceptor) is an active-site residue. His192 contacts Zn(2+).

Belongs to the aldolase class II family. MtnB subfamily. It depends on Zn(2+) as a cofactor.

Its subcellular location is the cytoplasm. It catalyses the reaction 5-(methylsulfanyl)-D-ribulose 1-phosphate = 5-methylsulfanyl-2,3-dioxopentyl phosphate + H2O. Its pathway is amino-acid biosynthesis; L-methionine biosynthesis via salvage pathway; L-methionine from S-methyl-5-thio-alpha-D-ribose 1-phosphate: step 2/6. Functionally, catalyzes the dehydration of methylthioribulose-1-phosphate (MTRu-1-P) into 2,3-diketo-5-methylthiopentyl-1-phosphate (DK-MTP-1-P). This is Methylthioribulose-1-phosphate dehydratase from Saccharomyces cerevisiae (strain AWRI1631) (Baker's yeast).